The following is a 178-amino-acid chain: Photosystem I assembly protein Ycf4 (178 aa).

Transmembrane regions (helical) follow at residues 19 to 39 and 61 to 81; these read FLVAAAVSVGGVGFLLASLSS and LVMGLYSIAAALLASYLWYVI.

The protein belongs to the Ycf4 family.

The protein localises to the cellular thylakoid membrane. In terms of biological role, seems to be required for the assembly of the photosystem I complex. In Synechococcus sp. (strain CC9902), this protein is Photosystem I assembly protein Ycf4.